Reading from the N-terminus, the 213-residue chain is Sclerostin (213 aa).

Residues 1 to 23 form the signal peptide; it reads MQLPLALCLVCLLVHAAFRVVEG. Residues 41–71 are disordered; sequence GEYPEPPPELENNKTMNRAENGGRPPHHPFE. The N-linked (GlcNAc...) asparagine glycan is linked to Asn-53. Intrachain disulfides connect Cys-80–Cys-134, Cys-94–Cys-148, Cys-105–Cys-165, and Cys-109–Cys-167. The 91-residue stretch at 82-172 folds into the CTCK domain; the sequence is ELHFTRYVTD…ASCKCKRLTR (91 aa). Residue Asn-175 is glycosylated (N-linked (GlcNAc...) asparagine). The segment at 178–213 is disordered; sequence ELKDFGPEAARPQKGRKPRPRARGAKANQAELENAY. Residues 190-201 show a composition bias toward basic residues; it reads QKGRKPRPRARG.

This sequence belongs to the sclerostin family. In terms of assembly, interacts with LRP4 (via the extracellular domain); the interaction facilitates the inhibition of Wnt signaling. Interacts with LRP5 (via the first two YWTD-EGF repeat domains); the interaction inhibits Wnt-mediated signaling. Interacts with LRP6.

The protein localises to the secreted. The protein resides in the extracellular space. It is found in the extracellular matrix. Functionally, negative regulator of bone growth that acts through inhibition of Wnt signaling and bone formation. This Chlorocebus aethiops (Green monkey) protein is Sclerostin.